The primary structure comprises 1784 residues: Sodium channel protein type 4 subunit alpha B (1784 aa).

At 1–130 the chain is on the cytoplasmic side; it reads MARLLPPTGT…RAAIRILIHS (130 aa). The interval 29–48 is disordered; the sequence is AEEAAEQERMKEQNVKVAEE. The I repeat unit spans residues 112 to 429; sequence CLSPFNPVRR…VVAMAYAEQN (318 aa). Residues 131–149 traverse the membrane as a helical segment; sequence LFSLVIMLTILTNCVFMAM. Over 150 to 156 the chain is Extracellular; it reads SDPPGWS. The chain crosses the membrane as a helical span at residues 157–177; sequence KILEYVFTGIYTFEAMVKVLS. The Cytoplasmic segment spans residues 178 to 191; that stretch reads RGFCIGDFTFLRDP. Residues 192-209 traverse the membrane as a helical segment; the sequence is WNWLDFMVISMAYLTEFV. Over 210–215 the chain is Extracellular; it reads DLGNIS. Asparagine 213 carries an N-linked (GlcNAc...) asparagine glycan. A helical membrane pass occupies residues 216–232; that stretch reads ALRTFRVLRALKTITVI. Residues 233 to 251 lie on the Cytoplasmic side of the membrane; it reads PGLKTIVGALIQSVKKLAD. Residues 252-271 traverse the membrane as a helical segment; the sequence is VMILTVFCLSVFALIGLQLF. The Extracellular portion of the chain corresponds to 272-366; that stretch reads MGNLRQKCVL…PNYGYTSYDN (95 aa). Cysteine 279 and cysteine 335 are joined by a disulfide. N-linked (GlcNAc...) asparagine glycans are attached at residues asparagine 291, asparagine 304, and asparagine 337. Residues cysteine 344 and cysteine 350 are joined by a disulfide bond. An intramembrane region (pore-forming) is located at residues 367 to 391; sequence FGWAFLALFRLMTQDFWENLFQLTL. At 392 to 398 the chain is on the extracellular side; the sequence is RAAGKTY. Residues 399–419 traverse the membrane as a helical segment; the sequence is MIFFVVIIFLGSFYLINLILA. Topologically, residues 420-568 are cytoplasmic; it reads VVAMAYAEQN…RIVYLFVMDP (149 aa). A disordered region spans residues 455-478; that stretch reads EQKNGMVNGSKTSLSSKKKGDNDQ. Residues 550–821 form an II repeat; it reads CCIPWVKFKR…QIAISRITRG (272 aa). The helical transmembrane segment at 569-587 threads the bilayer; that stretch reads FVDLGITLCIVLNTVFMAM. The Extracellular segment spans residues 588-598; sequence EHYPMSVHVEE. Residues 599 to 618 form a helical membrane-spanning segment; that stretch reads VLAIGNLVFTGIFAAEMVLK. Residues 619–632 are Cytoplasmic-facing; it reads LIALDPYYYFQVGW. Residues 633 to 652 form a helical membrane-spanning segment; the sequence is NIFDSIIVTMSLVELMLADV. The Extracellular portion of the chain corresponds to 653–654; it reads EG. The chain crosses the membrane as a helical span at residues 655 to 672; that stretch reads LSVLRSFRLMRVFKLAKS. Residues 673 to 688 are Cytoplasmic-facing; sequence WPTLNMLIKIIGNSVG. The helical transmembrane segment at 689-707 threads the bilayer; the sequence is ALGNLTLVLAIIVFIFAVV. Residues 708 to 736 lie on the Extracellular side of the membrane; it reads GMQLFGKSYTDSVCKISSDCELPRWHMAD. Cysteine 721 and cysteine 727 are joined by a disulfide. The pore-forming intramembrane region spans 737–757; sequence FFHAFLIIFRVLCGEWIETMW. At 758 to 768 the chain is on the extracellular side; it reads DCMEVAGQGMC. Cysteine 759 and cysteine 768 are disulfide-bonded. The chain crosses the membrane as a helical span at residues 769–787; sequence IIVFMMVMVIGNLVVLNLF. Residues 788–973 lie on the Cytoplasmic side of the membrane; the sequence is LALLLSSFSG…TCFAIVEHSY (186 aa). The tract at residues 870 to 928 is disordered; the sequence is PIANGESDDDDGNGSSEDEDDEGRDINMKKKNGDESSTCSTVDKPPEVEDLVEEEEEDL. A compositionally biased stretch (acidic residues) spans 875–892; it reads ESDDDDGNGSSEDEDDEG. Over residues 893–903 the composition is skewed to basic and acidic residues; sequence RDINMKKKNGD. The segment covering 917–928 has biased composition (acidic residues); that stretch reads VEDLVEEEEEDL. Residues 954–1269 form an III repeat; that stretch reads KGKAWWNFRK…KKYYNAMKKL (316 aa). The helical transmembrane segment at 974–991 threads the bilayer; sequence FETFIIFMILLSSGALAF. The Extracellular segment spans residues 992–1004; it reads EDIYIEQRRMIKI. The helical transmembrane segment at 1005–1023 threads the bilayer; it reads ILEYADQVFTYVFVVEMLL. Residues 1024-1037 are Cytoplasmic-facing; sequence KWVAYGFKVYFTNA. Residues 1038–1056 form a helical membrane-spanning segment; the sequence is WCWLDFLIVDVSLISLTAN. Residues 1057–1064 are Extracellular-facing; the sequence is ILGYSELG. The chain crosses the membrane as a helical span at residues 1065 to 1083; sequence AIKSLRTLRALRPLRALSR. Residues 1084 to 1101 are Cytoplasmic-facing; sequence FEGMRVVVVNALVGAIPS. Residues 1102–1121 traverse the membrane as a helical segment; the sequence is IFNVLLVCLIFWLIFSIMGV. Residues 1122–1173 are Extracellular-facing; sequence NLFAGKFYYCFNETSEEVFDHNVVNNKTDCYELMEFHPEVRWMNGKINFDNV. The cysteines at positions 1131 and 1151 are disulfide-linked. 2 N-linked (GlcNAc...) asparagine glycosylation sites follow: asparagine 1133 and asparagine 1147. The segment at residues 1174-1195 is an intramembrane region (pore-forming); it reads GMGYLALLQVATFKGWMDIMYS. Topologically, residues 1196–1212 are extracellular; the sequence is AVDSRAIESQPVYEANL. The chain crosses the membrane as a helical span at residues 1213-1234; sequence YMYIYFVIFIIFGSFFTLNLFI. The Cytoplasmic portion of the chain corresponds to 1235 to 1297; sequence GVIIDNFNQQ…LVFDFVTQQF (63 aa). Positions 1253 to 1255 are important for rapid channel inactivation; the sequence is IFM. An IV repeat occupies 1278–1575; it reads IPRPTNCCQG…WEKFDPTASQ (298 aa). A helical transmembrane segment spans residues 1298-1315; it reads FDIFIMVMICLNMVTMMV. Topologically, residues 1316 to 1326 are extracellular; the sequence is ETDDQSAEIEE. A helical transmembrane segment spans residues 1327–1345; that stretch reads ILFYINFAFIILFTGECVL. Over 1346-1357 the chain is Cytoplasmic; the sequence is KITALRYHYFSI. Residues 1358–1375 form a helical membrane-spanning segment; the sequence is GWNIFDFVVVILSILGIG. At 1376–1388 the chain is on the extracellular side; the sequence is LADLIEKYFVSPT. The chain crosses the membrane as a helical span at residues 1389-1405; the sequence is LFRVIRLARIGRVLRLI. Residues 1406 to 1424 are Cytoplasmic-facing; it reads RGAKGIRTLLFALMMSLPA. Residues 1425-1442 traverse the membrane as a helical segment; that stretch reads LFNIGLLLFLIMFIFSIF. The Extracellular segment spans residues 1443 to 1464; it reads GMSNFAYVKKEVGIDDMMNFET. An intramembrane region (pore-forming) is located at residues 1465–1487; that stretch reads FGNSIICMFMITTSAGWDGLLAP. At 1488 to 1516 the chain is on the extracellular side; that stretch reads ILNSPPDCDPDVDNPGSTTRGNCGNAAVG. Cysteine 1495 and cysteine 1510 are joined by a disulfide. A helical transmembrane segment spans residues 1517 to 1539; the sequence is IVFFCSYIVMSFLVVVNMYIAII. Topologically, residues 1540-1784 are cytoplasmic; that stretch reads LENFNVATEE…AADNLRESIV (245 aa). One can recognise an IQ domain in the interval 1669-1698; that stretch reads EEVAASTIQRAYRSHILKRCVKQASYMYRD.

Belongs to the sodium channel (TC 1.A.1.10) family. Nav1.4/SCN4A subfamily. As to quaternary structure, voltage-gated sodium (Nav) channels consist of an ion-conducting alpha subunit which is functional on its own associated with regulatory beta subunits. Post-translationally, lacks the cysteine which covalently binds the conotoxin GVIIJ. This cysteine (position 719) is speculated in other sodium channel subunits alpha to be implied in covalent binding with the sodium channel subunit beta-2 or beta-4. Expressed in skeletal muscle, heart, brain, spinal cord, and eye.

It is found in the cell membrane. It catalyses the reaction Na(+)(in) = Na(+)(out). Functionally, pore-forming subunit of a voltage-gated sodium (Nav) channel that directly mediates the depolarizing phase of action potentials in excitable membranes. Navs, also called VGSCs (voltage-gated sodium channels) or VDSCs (voltage-dependent sodium channels), operate by switching between closed and open conformations depending on the voltage difference across the membrane. In the open conformation they allow Na(+) ions to selectively pass through the pore, along their electrochemical gradient. The influx of Na+ ions provokes membrane depolarization, initiating the propagation of electrical signals throughout cells and tissues. The protein is Sodium channel protein type 4 subunit alpha B (scn4ab) of Danio rerio (Zebrafish).